The primary structure comprises 448 residues: Tubulin beta-2 chain (448 aa).

Residues glutamine 11, glutamate 69, serine 138, glycine 142, threonine 143, glycine 144, asparagine 204, and asparagine 226 each contribute to the GTP site. Glutamate 69 is a Mg(2+) binding site. The segment at 429–448 (TADEDGYEYEDEEEVGEEDA) is disordered.

This sequence belongs to the tubulin family. As to quaternary structure, dimer of alpha and beta chains. A typical microtubule is a hollow water-filled tube with an outer diameter of 25 nm and an inner diameter of 15 nM. Alpha-beta heterodimers associate head-to-tail to form protofilaments running lengthwise along the microtubule wall with the beta-tubulin subunit facing the microtubule plus end conferring a structural polarity. Microtubules usually have 13 protofilaments but different protofilament numbers can be found in some organisms and specialized cells. Mg(2+) is required as a cofactor.

The protein resides in the cytoplasm. It localises to the cytoskeleton. Its function is as follows. Tubulin is the major constituent of microtubules, a cylinder consisting of laterally associated linear protofilaments composed of alpha- and beta-tubulin heterodimers. Microtubules grow by the addition of GTP-tubulin dimers to the microtubule end, where a stabilizing cap forms. Below the cap, tubulin dimers are in GDP-bound state, owing to GTPase activity of alpha-tubulin. This Lupinus albus (White lupine) protein is Tubulin beta-2 chain (TUBB2).